The primary structure comprises 561 residues: Putative transport protein YbjL (561 aa).

5 consecutive transmembrane segments (helical) span residues 8–28 (LLNG…LCLG), 32–52 (LGSI…LLGQ), 66–86 (FMLF…SIFF), 94–114 (MLAL…GKLF), and 158–178 (NLSL…IVGA). 2 consecutive RCK C-terminal domains span residues 200–288 (RGLD…SFRN) and 292–373 (VFDR…RIGF). 6 consecutive transmembrane segments (helical) span residues 383–403 (LLAF…TFQF), 406–426 (FSFG…LGFM), 451–471 (VFMA…LGAI), 475–495 (MLIA…LFGA), 503–523 (ALLF…EIIS), and 540–560 (AIAN…CPGL).

The protein belongs to the AAE transporter (TC 2.A.81) family. YbjL subfamily.

It localises to the cell membrane. In Shigella dysenteriae serotype 1 (strain Sd197), this protein is Putative transport protein YbjL.